The primary structure comprises 71 residues: Mitotic-spindle organizing protein 1B (71 aa).

The protein belongs to the MOZART1 family. Homo- and heteromultimer. Part of the gamma-tubulin complex. Interacts with TUBB2/TUBB3, GIP2, GCP3 and TSA1 (via C-terminal domain). Mostly expressed in siliques and flowers, and, to a lower extent, in leaves, roots and seedlings, with highest levels in young tissues and meristematic cells, and the vasculature.

The protein localises to the cytoplasm. It is found in the cytoskeleton. Its subcellular location is the microtubule organizing center. It localises to the spindle. The protein resides in the nucleus. The protein localises to the phragmoplast. It is found in the nucleus envelope. Required for gamma-tubulin complex recruitment to the microtubule organizing centers (MTOCs). During mitosis, modulates gamma-tubulin complex localization, spindle stability and chromosomal segregation. Necessary for gametophyte development and embryogenesis. This chain is Mitotic-spindle organizing protein 1B (GIP1), found in Arabidopsis thaliana (Mouse-ear cress).